The following is a 501-amino-acid chain: UPF0616 protein C1687.04 (501 aa).

This sequence belongs to the UPF0616 family.

It localises to the cytoplasm. It is found in the nucleus. The chain is UPF0616 protein C1687.04 from Schizosaccharomyces pombe (strain 972 / ATCC 24843) (Fission yeast).